Reading from the N-terminus, the 873-residue chain is Leucine--tRNA ligase (873 aa).

The short motif at 42-52 (PYPSGKLHMGH) is the 'HIGH' region element. Positions 628–632 (KMAKS) match the 'KMSKS' region motif. Position 631 (Lys631) interacts with ATP.

It belongs to the class-I aminoacyl-tRNA synthetase family.

It localises to the cytoplasm. The catalysed reaction is tRNA(Leu) + L-leucine + ATP = L-leucyl-tRNA(Leu) + AMP + diphosphate. The polypeptide is Leucine--tRNA ligase (Aromatoleum aromaticum (strain DSM 19018 / LMG 30748 / EbN1) (Azoarcus sp. (strain EbN1))).